The sequence spans 427 residues: Histidinol dehydrogenase (427 aa).

Residues Y127, Q185, and N208 each coordinate NAD(+). Substrate is bound by residues S232, Q254, and H257. The Zn(2+) site is built by Q254 and H257. Catalysis depends on proton acceptor residues E321 and H322. 4 residues coordinate substrate: H322, D355, E409, and H414. Position 355 (D355) interacts with Zn(2+). Zn(2+) is bound at residue H414.

The protein belongs to the histidinol dehydrogenase family. It depends on Zn(2+) as a cofactor.

It catalyses the reaction L-histidinol + 2 NAD(+) + H2O = L-histidine + 2 NADH + 3 H(+). It functions in the pathway amino-acid biosynthesis; L-histidine biosynthesis; L-histidine from 5-phospho-alpha-D-ribose 1-diphosphate: step 9/9. Functionally, catalyzes the sequential NAD-dependent oxidations of L-histidinol to L-histidinaldehyde and then to L-histidine. In Haemophilus influenzae (strain 86-028NP), this protein is Histidinol dehydrogenase.